A 316-amino-acid polypeptide reads, in one-letter code: Transaldolase (316 aa).

The Schiff-base intermediate with substrate role is filled by Lys-132.

Belongs to the transaldolase family. Type 1 subfamily. As to quaternary structure, homodimer.

It localises to the cytoplasm. It carries out the reaction D-sedoheptulose 7-phosphate + D-glyceraldehyde 3-phosphate = D-erythrose 4-phosphate + beta-D-fructose 6-phosphate. It participates in carbohydrate degradation; pentose phosphate pathway; D-glyceraldehyde 3-phosphate and beta-D-fructose 6-phosphate from D-ribose 5-phosphate and D-xylulose 5-phosphate (non-oxidative stage): step 2/3. Its function is as follows. Transaldolase is important for the balance of metabolites in the pentose-phosphate pathway. In Aliivibrio fischeri (strain MJ11) (Vibrio fischeri), this protein is Transaldolase.